Reading from the N-terminus, the 232-residue chain is Demethylmenaquinone methyltransferase (232 aa).

Residues T58, D79, and 104–105 (NA) each bind S-adenosyl-L-methionine.

Belongs to the class I-like SAM-binding methyltransferase superfamily. MenG/UbiE family.

It catalyses the reaction a 2-demethylmenaquinol + S-adenosyl-L-methionine = a menaquinol + S-adenosyl-L-homocysteine + H(+). The protein operates within quinol/quinone metabolism; menaquinone biosynthesis; menaquinol from 1,4-dihydroxy-2-naphthoate: step 2/2. Methyltransferase required for the conversion of demethylmenaquinol (DMKH2) to menaquinol (MKH2). This is Demethylmenaquinone methyltransferase from Bacillus licheniformis (strain ATCC 14580 / DSM 13 / JCM 2505 / CCUG 7422 / NBRC 12200 / NCIMB 9375 / NCTC 10341 / NRRL NRS-1264 / Gibson 46).